Reading from the N-terminus, the 268-residue chain is Shikimate dehydrogenase (NADP(+)) (268 aa).

Residues 13–15 (SLS) and T60 contribute to the shikimate site. The active-site Proton acceptor is K64. An NADP(+)-binding site is contributed by E76. Shikimate is bound by residues N85 and D100. NADP(+) is bound by residues 124 to 128 (GAGGA), 148 to 153 (NRTMAR), and I209. Position 211 (Y211) interacts with shikimate. G232 serves as a coordination point for NADP(+).

The protein belongs to the shikimate dehydrogenase family. As to quaternary structure, homodimer.

It catalyses the reaction shikimate + NADP(+) = 3-dehydroshikimate + NADPH + H(+). It participates in metabolic intermediate biosynthesis; chorismate biosynthesis; chorismate from D-erythrose 4-phosphate and phosphoenolpyruvate: step 4/7. Functionally, involved in the biosynthesis of the chorismate, which leads to the biosynthesis of aromatic amino acids. Catalyzes the reversible NADPH linked reduction of 3-dehydroshikimate (DHSA) to yield shikimate (SA). The sequence is that of Shikimate dehydrogenase (NADP(+)) from Staphylococcus aureus (strain JH1).